Here is a 120-residue protein sequence, read N- to C-terminus: V-type proton ATPase subunit F (120 aa).

It belongs to the V-ATPase F subunit family. As to quaternary structure, V-ATPase is a heteromultimeric enzyme composed of a peripheral catalytic V1 complex (components A to H) attached to an integral membrane V0 proton pore complex (components: a, c, c', c'' and d).

Subunit of the peripheral V1 complex of vacuolar ATPase essential for assembly or catalytic function. V-ATPase is responsible for acidifying a variety of intracellular compartments in eukaryotic cells. In Dictyostelium discoideum (Social amoeba), this protein is V-type proton ATPase subunit F (vatF).